A 238-amino-acid polypeptide reads, in one-letter code: Peptidyl-tRNA hydrolase (238 aa).

Tyr-14 is a tRNA binding site. The Proton acceptor role is filled by His-19. The tRNA site is built by Tyr-64, Asn-66, and Asn-112. The interval 202-225 is disordered; it reads PAAQSHIHQARNSAQPKKLPETGP. The segment covering 207–216 has biased composition (polar residues); that stretch reads HIHQARNSAQ.

The protein belongs to the PTH family. Monomer.

It localises to the cytoplasm. The enzyme catalyses an N-acyl-L-alpha-aminoacyl-tRNA + H2O = an N-acyl-L-amino acid + a tRNA + H(+). Hydrolyzes ribosome-free peptidyl-tRNAs (with 1 or more amino acids incorporated), which drop off the ribosome during protein synthesis, or as a result of ribosome stalling. Its function is as follows. Catalyzes the release of premature peptidyl moieties from peptidyl-tRNA molecules trapped in stalled 50S ribosomal subunits, and thus maintains levels of free tRNAs and 50S ribosomes. This is Peptidyl-tRNA hydrolase from Agrobacterium fabrum (strain C58 / ATCC 33970) (Agrobacterium tumefaciens (strain C58)).